The sequence spans 367 residues: Probable protein phosphatase 2C 57 (367 aa).

Positions 1 to 29 are disordered; that stretch reads MEEHRLGGGGGGGGGGGRPPIPGAAGRKL. The span at 7-18 shows a compositional bias: gly residues; it reads GGGGGGGGGGGR. Residues 67 to 331 form the PPM-type phosphatase domain; it reads RSGGWADIGS…DNLSVVVICF (265 aa). Positions 111, 112, 279, and 322 each coordinate Mn(2+).

This sequence belongs to the PP2C family. The cofactor is Mg(2+). It depends on Mn(2+) as a cofactor.

The catalysed reaction is O-phospho-L-seryl-[protein] + H2O = L-seryl-[protein] + phosphate. The enzyme catalyses O-phospho-L-threonyl-[protein] + H2O = L-threonyl-[protein] + phosphate. In Oryza sativa subsp. japonica (Rice), this protein is Probable protein phosphatase 2C 57.